We begin with the raw amino-acid sequence, 194 residues long: Protein GrpE (194 aa).

Over residues 1–24 the composition is skewed to basic and acidic residues; sequence MEEKDKEEKVTGENLEPEDKNLEQ. The tract at residues 1-41 is disordered; that stretch reads MEEKDKEEKVTGENLEPEDKNLEQEDKEEVVGPQEEQQIDE.

The protein belongs to the GrpE family. In terms of assembly, homodimer.

The protein localises to the cytoplasm. In terms of biological role, participates actively in the response to hyperosmotic and heat shock by preventing the aggregation of stress-denatured proteins, in association with DnaK and GrpE. It is the nucleotide exchange factor for DnaK and may function as a thermosensor. Unfolded proteins bind initially to DnaJ; upon interaction with the DnaJ-bound protein, DnaK hydrolyzes its bound ATP, resulting in the formation of a stable complex. GrpE releases ADP from DnaK; ATP binding to DnaK triggers the release of the substrate protein, thus completing the reaction cycle. Several rounds of ATP-dependent interactions between DnaJ, DnaK and GrpE are required for fully efficient folding. The chain is Protein GrpE from Carboxydothermus hydrogenoformans (strain ATCC BAA-161 / DSM 6008 / Z-2901).